Reading from the N-terminus, the 1063-residue chain is Structural polyprotein (1063 aa).

The segment at 1–131 is disordered; the sequence is MASTTPITME…LGPPTNPFQA (131 aa). The span at 18 to 34 shows a compositional bias: low complexity; sequence AQSRALRAGLAAGASQS. The segment at 30 to 69 is human C1QBP/SF2P32-binding; the sequence is GASQSRRPRPPRQRDSSTSGDDSGRDSGGPRRRRGNRGRG. A Phosphoserine; by host modification is found at Ser46. Residues 59-69 show a composition bias toward basic residues; that stretch reads PRRRRGNRGRG. Positions 70-87 are enriched in basic and acidic residues; sequence QRKDWSRAPPPPEERQES. Residues 93-107 are compositionally biased toward pro residues; sequence APKPSRAPPQQPQPP. Cys153 and Cys197 are disulfide-bonded. The tract at residues 279 to 300 is functions as E2 signal peptide; sequence GAPQAFLAGLLLAAVAVGTARA. The Extracellular portion of the chain corresponds to 301 to 534; that stretch reads GLQPRADMAA…LWLATANALS (234 aa). Asn353, Asn371, Asn410, and Asn429 each carry an N-linked (GlcNAc...) asparagine; by host glycan. Residues 535–555 form a helical membrane-spanning segment; sequence LDHAFAAFVLLVPWVLIFMVC. The Cytoplasmic segment spans residues 556–582; the sequence is RRACRRRGAAAALTAVVLQGYNPPAYG. The segment at 563–582 is functions as E1 signal peptide; it reads GAAAALTAVVLQGYNPPAYG. The Extracellular segment spans residues 583–1028; it reads EEAFTYLCTA…QTWAEWAAAH (446 aa). 8 disulfides stabilise this stretch: Cys590-Cys595, Cys619-Cys824, Cys641-Cys653, Cys699-Cys712, Cys758-Cys767, Cys807-Cys817, Cys931-Cys934, and Cys950-Cys983. An N-linked (GlcNAc...) asparagine; by host glycan is attached at Asn658. Residues Asn670 and Ala671 each contribute to the Ca(2+) site. Ca(2+) is bound by residues Asp718 and Thr719. 2 N-linked (GlcNAc...) asparagine; by host glycosylation sites follow: Asn759 and Asn791. Residues Thr1011 and Thr1012 are each glycosylated (O-linked (GalNAc...) threonine; by host). A helical transmembrane segment spans residues 1029–1049; that stretch reads WWQLTLGAICALLLAGLLACC. Residues 1050-1063 lie on the Cytoplasmic side of the membrane; it reads AKCLYYLRGAIAPR.

In terms of assembly, homodimer; further assembles into homooligomer. Interacts with human C1QBP. Interacts (via N-terminus) with protease/methyltransferase p150. Heterodimer with spike glycoprotein E2. As to quaternary structure, heterodimer with spike glycoprotein E1. Post-translationally, structural polyprotein: Specific enzymatic cleavages in vivo yield mature proteins. Two signal peptidase-mediated cleavages within the polyprotein produce the structural proteins capsid, E2, and E1. The E2 signal peptide remains attached to the C-terminus of the capsid protein after cleavage by the signal peptidase. Another signal peptide at E2 C-terminus directs E1 to the ER, with a similar mechanism. Contains three N-linked oligosaccharides. In terms of processing, capsid is phosphorylated on Ser-46 by host. This phosphorylation negatively regulates capsid protein RNA-binding activity. Dephosphorylated by human PP1A.

The protein localises to the virion. The protein resides in the host cytoplasm. Its subcellular location is the host mitochondrion. It is found in the virion membrane. It localises to the host Golgi apparatus membrane. Its function is as follows. Capsid protein interacts with genomic RNA and assembles into icosahedric core particles 65-70 nm in diameter. The resulting nucleocapsid eventually associates with the cytoplasmic domain of E2 at the cell membrane, leading to budding and formation of mature virions from host Golgi membranes. Phosphorylation negatively regulates RNA-binding activity, possibly delaying virion assembly during the viral replication phase. Capsid protein dimerizes and becomes disulfide-linked in the virion. Modulates genomic RNA replication. Modulates subgenomic RNA synthesis by interacting with human C1QBP/SF2P32. Induces both perinuclear clustering of mitochondria and the formation of electron-dense intermitochondrial plaques, both hallmarks of rubella virus infected cells. Induces apoptosis when expressed in transfected cells. Responsible for viral attachment to target host cell, by binding to the cell receptor. Its transport to the plasma membrane depends on interaction with E1 protein. The surface glycoproteins display an irregular helical organization and a pseudo-tetrameric inner nucleocapsid arrangement. In terms of biological role, class II viral fusion protein. Fusion activity is inactive as long as E1 is bound to E2 in mature virion. After virus attachment to target cell and clathrin-mediated endocytosis, acidification of the endosome would induce dissociation of E1/E2 heterodimer and concomitant trimerization of the E1 subunits. This E1 homotrimer is fusion active, and promotes release of viral nucleocapsid in cytoplasm after endosome and viral membrane fusion. The cytoplasmic tail of spike glycoprotein E1 modulates virus release. The surface glycoproteins display an irregular helical organization and a pseudo-tetrameric inner nucleocapsid arrangement. The polypeptide is Structural polyprotein (Homo sapiens (Human)).